The sequence spans 621 residues: Myosin-binding protein C, slow-type (621 aa).

Ig-like C2-type domains are found at residues 1-53 (EEIV…VDLR), 54-142 (PLKI…HVID), and 144-241 (PKII…LWIS). Phosphothreonine is present on Thr-28. Phosphoserine is present on Ser-233. Fibronectin type-III domains lie at 244–343 (LRLA…TSPP), 344–459 (TLLA…IEPP), and 556–621 (PPQA…VIGN). At Thr-420 the chain carries Phosphothreonine. At Tyr-445 the chain carries Phosphotyrosine. Residues 459 to 553 (PKIRIPRHLK…ASIDIQIVDR (95 aa)) form the Ig-like C2-type 4 domain.

This sequence belongs to the immunoglobulin superfamily. MyBP family. Interacts with USP25 (isoform USP25m only); the interaction prevents proteasomal degradation of MYBPC1.

In terms of biological role, thick filament-associated protein located in the crossbridge region of vertebrate striated muscle a bands. Slow skeletal protein that binds to both myosin and actin. In vitro, binds to native thin filaments and modifies the activity of actin-activated myosin ATPase. May modulate muscle contraction or may play a more structural role. This Rattus norvegicus (Rat) protein is Myosin-binding protein C, slow-type (Mybpc1).